Reading from the N-terminus, the 1151-residue chain is uncharacterized protein (1151 aa).

5 disordered regions span residues 611-633, 709-740, 753-778, 795-880, and 1060-1151; these read FVKG…DEEE, NLVP…IMEV, PPIL…KSIL, PPVI…PPKL, and LKEP…TQQE. Pro residues-rich tracts occupy residues 754–773 and 811–842; these read PILP…PQEP and IVPP…PSQP. Over residues 867-878 the composition is skewed to low complexity; the sequence is PITPDTPAITPP. Over residues 1082-1091 the composition is skewed to acidic residues; that stretch reads ESDNEDDELD. The segment covering 1131 to 1142 has biased composition (polar residues); the sequence is PVDTSDATKIST.

This is an uncharacterized protein from Ostreid herpesvirus 1 (isolate France) (OsHV-1).